The primary structure comprises 654 residues: MICOS complex subunit MIC60-2 (654 aa).

The transit peptide at 1-12 directs the protein to the mitochondrion; that stretch reads MRGSRNLLTQRL. The Mitochondrial matrix segment spans residues 13–20; it reads ASSRATGS. A helical transmembrane segment spans residues 21 to 43; it reads SGGLKFVGATVGAVTAGAAGVAG. Over 44-654 the chain is Mitochondrial intermembrane; it reads YASYDNEFRK…AALTSIRSTY (611 aa). Residues 115 to 129 show a composition bias toward basic and acidic residues; the sequence is LKETTEPKKIEKKPE. Positions 115 to 140 are disordered; sequence LKETTEPKKIEKKPENPYIGAKTPLN.

It belongs to the MICOS complex subunit Mic60 family. In terms of assembly, component of the mitochondrial contact site and cristae organizing system (MICOS) complex. Expressed in the gonads and muscle cells.

It is found in the mitochondrion inner membrane. The protein localises to the cytoplasm. Functionally, sustains mitochondrial morphology probably through maintaining cristae morphology. May act as a component of the MICOS complex, a large protein complex of the mitochondria. The protein is MICOS complex subunit MIC60-2 of Caenorhabditis elegans.